Reading from the N-terminus, the 122-residue chain is Basic phospholipase A2 homolog Gln49-PLA2 (122 aa).

7 cysteine pairs are disulfide-bonded: C26-C115, C28-C44, C43-C95, C49-C122, C50-C88, C57-C81, and C75-C86.

The protein belongs to the phospholipase A2 family. Group II subfamily. Q49 sub-subfamily. In terms of assembly, monomer. As to expression, expressed by the venom gland.

It localises to the secreted. In terms of biological role, snake venom phospholipase A2 (PLA2) homolog that shows local myotoxicity, apparent anticoagulant activity, and neurotoxicity. Shows analgesic effect on mice due to a decrease of action potentials and nerve conduction velocity. These effects are caused by inhibition of voltage-gated ion channels (potassium (Kv) and sodium (Nav)). In addition, analgesic effects are antagonized by naloxone, implying the mechanism of action is correlated with opioid receptors (probably indirectly). Does not show detectable PLA2 activity on egg yolk phospholipids. This chain is Basic phospholipase A2 homolog Gln49-PLA2, found in Gloydius ussuriensis (Ussuri mamushi).